The chain runs to 879 residues: Phosphoenolpyruvate carboxylase (879 aa).

Catalysis depends on residues H138 and K545.

The protein belongs to the PEPCase type 1 family. The cofactor is Mg(2+).

It carries out the reaction oxaloacetate + phosphate = phosphoenolpyruvate + hydrogencarbonate. Its function is as follows. Forms oxaloacetate, a four-carbon dicarboxylic acid source for the tricarboxylic acid cycle. This is Phosphoenolpyruvate carboxylase (ppc) from Haemophilus influenzae (strain ATCC 51907 / DSM 11121 / KW20 / Rd).